The chain runs to 147 residues: Hemoglobin subunit gamma (147 aa).

The 145-residue stretch at asparagine 3–histidine 147 folds into the Globin domain. Residues histidine 64 and histidine 93 each coordinate heme b.

Belongs to the globin family. Heterotetramer of two alpha chains and two gamma chains in fetal hemoglobin (Hb F). In terms of tissue distribution, red blood cells.

Gamma chains make up the fetal hemoglobin F, in combination with alpha chains. The polypeptide is Hemoglobin subunit gamma (HBG) (Alouatta seniculus (Red howler monkey)).